The primary structure comprises 562 residues: Dihydroxy-acid dehydratase 2 (562 aa).

C50 provides a ligand contact to [2Fe-2S] cluster. Residue D82 participates in Mg(2+) binding. C123 serves as a coordination point for [2Fe-2S] cluster. Mg(2+) contacts are provided by D124, K125, and E447. K125 carries the post-translational modification N6-carboxylysine. The active-site Proton acceptor is S473.

It belongs to the IlvD/Edd family. As to quaternary structure, homodimer. The cofactor is [2Fe-2S] cluster. It depends on Mg(2+) as a cofactor.

The catalysed reaction is (2R)-2,3-dihydroxy-3-methylbutanoate = 3-methyl-2-oxobutanoate + H2O. It catalyses the reaction (2R,3R)-2,3-dihydroxy-3-methylpentanoate = (S)-3-methyl-2-oxopentanoate + H2O. The protein operates within amino-acid biosynthesis; L-isoleucine biosynthesis; L-isoleucine from 2-oxobutanoate: step 3/4. Its pathway is amino-acid biosynthesis; L-valine biosynthesis; L-valine from pyruvate: step 3/4. In terms of biological role, functions in the biosynthesis of branched-chain amino acids. Catalyzes the dehydration of (2R,3R)-2,3-dihydroxy-3-methylpentanoate (2,3-dihydroxy-3-methylvalerate) into 2-oxo-3-methylpentanoate (2-oxo-3-methylvalerate) and of (2R)-2,3-dihydroxy-3-methylbutanoate (2,3-dihydroxyisovalerate) into 2-oxo-3-methylbutanoate (2-oxoisovalerate), the penultimate precursor to L-isoleucine and L-valine, respectively. This Bordetella pertussis (strain Tohama I / ATCC BAA-589 / NCTC 13251) protein is Dihydroxy-acid dehydratase 2.